The sequence spans 431 residues: Mitochondrial distribution and morphology protein 12 (431 aa).

An SMP-LTD domain is found at 1–431; sequence MSIDLNWETL…VYPSFWTFLV (431 aa). Disordered regions lie at residues 68-153 and 209-289; these read DFYE…GVST and QSHT…PKPE. Positions 69-96 are enriched in acidic residues; it reads FYEDLDDDDGGSDEDDEGSNSCQTDEEN. The segment covering 97–113 has biased composition (basic and acidic residues); the sequence is EAAKTLRERRKMDRVER. The span at 115-129 shows a compositional bias: polar residues; the sequence is ANGSSNVSNPPSYTD. A compositionally biased stretch (low complexity) spans 241–252; that stretch reads SASTLAVSSSTT.

The protein belongs to the MDM12 family. Component of the ER-mitochondria encounter structure (ERMES) or MDM complex, composed of mmm1, mdm10, mdm12 and mdm34. A mmm1 homodimer associates with one molecule of mdm12 on each side in a pairwise head-to-tail manner, and the SMP-LTD domains of mmm1 and mdm12 generate a continuous hydrophobic tunnel for phospholipid trafficking.

The protein resides in the mitochondrion outer membrane. Its subcellular location is the endoplasmic reticulum membrane. In terms of biological role, component of the ERMES/MDM complex, which serves as a molecular tether to connect the endoplasmic reticulum (ER) and mitochondria. Components of this complex are involved in the control of mitochondrial shape and protein biogenesis, and function in nonvesicular lipid trafficking between the ER and mitochondria. Mdm12 is required for the interaction of the ER-resident membrane protein mmm1 and the outer mitochondrial membrane-resident beta-barrel protein mdm10. The mdm12-mmm1 subcomplex functions in the major beta-barrel assembly pathway that is responsible for biogenesis of all mitochondrial outer membrane beta-barrel proteins, and acts in a late step after the SAM complex. The mdm10-mdm12-mmm1 subcomplex further acts in the TOM40-specific pathway after the action of the mdm12-mmm1 complex. Essential for establishing and maintaining the structure of mitochondria and maintenance of mtDNA nucleoids. In Sclerotinia sclerotiorum (strain ATCC 18683 / 1980 / Ss-1) (White mold), this protein is Mitochondrial distribution and morphology protein 12.